Here is a 985-residue protein sequence, read N- to C-terminus: NAD kinase 2, chloroplastic (985 aa).

The N-terminal 62 residues, 1 to 62 (MFLCFCPCHV…KRRLRFVIRA (62 aa)), are a transit peptide targeting the chloroplast. The segment at 335 to 380 (APKAEQVELFASIVSDSSKRPIYVHSKEGVWRTSAMVSRWKQYMTR) is calmodulin-binding. Disordered regions lie at residues 389 to 466 (SEES…PPGN) and 548 to 615 (FSNG…DEAG). Composition is skewed to basic and acidic residues over residues 390-399 (EESKRREVSE) and 413-429 (VPDE…EVDS). The span at 548–569 (FSNGNVHASDNTNKSISDNRGN) shows a compositional bias: polar residues.

This sequence belongs to the NAD kinase family. As to expression, expressed in leaves.

The protein localises to the plastid. Its subcellular location is the chloroplast. The enzyme catalyses NAD(+) + ATP = ADP + NADP(+) + H(+). Its function is as follows. Involved in chlorophyll synthesis and chloroplast protection against oxidative damage. This Arabidopsis thaliana (Mouse-ear cress) protein is NAD kinase 2, chloroplastic (NADK2).